The following is a 196-amino-acid chain: MNNEQKVEALLFVAGAEGISVEELSNFTGYAKPAILTMLDNLEKNYEVNSKTALKLIQTGGTYKLVTKPELASILEKYFDRNSRSGLSPAALEILSIVAYRQPITRIEIDQIRGVQSGTTLQNLVLRNLVKVVGRLEEPGRPKTYGTTDEFLDYFGLEDIKDLPKLEKVGEDSELDDSDLFLQEFESKMNLNNKEK.

This sequence belongs to the ScpB family. In terms of assembly, homodimer. Homodimerization may be required to stabilize the binding of ScpA to the Smc head domains. Component of a cohesin-like complex composed of ScpA, ScpB and the Smc homodimer, in which ScpA and ScpB bind to the head domain of Smc. The presence of the three proteins is required for the association of the complex with DNA.

It is found in the cytoplasm. Functionally, participates in chromosomal partition during cell division. May act via the formation of a condensin-like complex containing Smc and ScpA that pull DNA away from mid-cell into both cell halves. This is Segregation and condensation protein B from Pediococcus pentosaceus (strain ATCC 25745 / CCUG 21536 / LMG 10740 / 183-1w).